The primary structure comprises 595 residues: MAMAFPLSYTPTITVKPVTYSRRSNFVVFSSSSNGRDPLEENSVPNGVKSLEKLQEEKRRAELSARIASGAFTVRKSSFPSTVKNGLSKIGIPSNVLDFMFDWTGSDQDYPKVPEAKGSIQAVRNEAFFIPLYELFLTYGGIFRLTFGPKSFLIVSDPSIAKHILKDNAKAYSKGILAEILDFVMGKGLIPADGEIWRRRRRAIVPALHQKYVAAMISLFGEASDRLCQKLDAAALKGEEVEMESLFSRLTLDIIGKAVFNYDFDSLTNDTGVIEAVYTVLREAEDRSVSPIPVWDIPIWKDISPRQRKVATSLKLINDTLDDLIATCKRMVEEEELQFHEEYMNERDPSILHFLLASGDDVSSKQLRDDLMTMLIAGHETSAAVLTWTFYLLTTEPSVVAKLQEEVDSVIGDRFPTIQDMKKLKYTTRVMNESLRLYPQPPVLIRRSIDNDILGEYPIKRGEDIFISVWNLHRSPLHWDDAEKFNPERWPLDGPNPNETNQNFSYLPFGGGPRKCIGDMFASFENVVAIAMLIRRFNFQIAPGAPPVKMTTGATIHTTEGLKLTVTKRTKPLDIPSVPILPMDTSRDEVSSALS.

The transit peptide at 1 to 28 (MAMAFPLSYTPTITVKPVTYSRRSNFVV) directs the protein to the chloroplast. Position 516 (Cys516) interacts with heme.

It belongs to the cytochrome P450 family. It depends on heme as a cofactor.

It localises to the plastid. It is found in the chloroplast. In terms of biological role, heme-containing cytochrome P450 involved in the biosynthesis of xanthophylls. Specific for beta-ring hydroxylation of alpha- and beta-carotene. Also has a low activity toward the epsilon-rings of alpha-carotene. The beta-ring of alpha-carotene is the preferred substrate in planta. The chain is Protein LUTEIN DEFICIENT 5, chloroplastic (CYP97A3) from Arabidopsis thaliana (Mouse-ear cress).